Reading from the N-terminus, the 586-residue chain is A-type ATP synthase subunit A (586 aa).

232–239 (GPFGSGKT) contributes to the ATP binding site.

This sequence belongs to the ATPase alpha/beta chains family. Has multiple subunits with at least A(3), B(3), C, D, E, F, H, I and proteolipid K(x).

The protein resides in the cell membrane. It catalyses the reaction ATP + H2O + 4 H(+)(in) = ADP + phosphate + 5 H(+)(out). Its function is as follows. Component of the A-type ATP synthase that produces ATP from ADP in the presence of a proton gradient across the membrane. The A chain is the catalytic subunit. This Methanococcus maripaludis (strain DSM 14266 / JCM 13030 / NBRC 101832 / S2 / LL) protein is A-type ATP synthase subunit A.